The following is a 266-amino-acid chain: MASATLPMDYKTPFGYAYKLYVEGKDEHSLYILDNYLKNANCSENTYEQALILCLTIMCEQRRSWTEMEEKLLHNYQGKIPDSIVVNWIITYLENSEFTKENYAQMINSLYRYQDAILKSELKDSILPKLVNCACSVQLTEPLKAILANSRGELENSLLLRIQAQEEELKMNLERSKTPDPSEDEGEFALTLKLQFSKVSRLINQGLTPLLSRLQLIDKNIKIVGAIFGIILLLFRLKKYISHSKKSAFSPQRWKFLLDQFLLAIS.

Ser176 carries the phosphoserine modification. A Phosphothreonine modification is found at Thr178.

This is an uncharacterized protein from Schizosaccharomyces pombe (strain 972 / ATCC 24843) (Fission yeast).